The sequence spans 283 residues: Interferon alpha-inducible protein 27-like protein 2B (283 aa).

A mitochondrion-targeting transit peptide spans 1–90; that stretch reads MKRKFVGAAI…AVGTATGARA (90 aa). A disordered region spans residues 90 to 120; it reads AEGSMGASREQESGPQDPPQELQEPQEPPSC. Transmembrane regions (helical) follow at residues 130–150, 176–196, and 202–222; these read FVGA…ALSA, GGGI…ILGL, and IILG…MGAC. Residues 227–283 form a disordered region; sequence PGLQDLQQEPKEPQEPQELQKQQEPQEPQELQKQQETQETQETQELQKTQEPPSYEK. Positions 242 to 283 are enriched in low complexity; the sequence is PQELQKQQEPQEPQELQKQQETQETQETQELQKTQEPPSYEK.

This sequence belongs to the IFI6/IFI27 family. Homooligomer. Interacts with BAK1. Interacts with BAX. Interacts with adenine nucleotide translocase.

The protein resides in the mitochondrion inner membrane. Its function is as follows. Functions in the intrinsic apoptotic signaling pathway and may have an interferon-induced antiviral activity. The sequence is that of Interferon alpha-inducible protein 27-like protein 2B from Mus musculus (Mouse).